The following is a 346-amino-acid chain: MSYQVSVAVVGATGYVGVELVRLLLSHPMVKIKYLCATQSSGKLLSSNYFHISQDDISVNISSFDDIDLSKVDVVFLCLPHGTSSEVVRKIHDVVRIIDLSADFRIKDAEVYKQWYGSHCCPDLVRDFVYGLTEIYWEDIQRSRFIACPGCYPTSVLIPLFPLLRLCLIKSQGIIVDAKSGVSGAGRSVKQDKLFCEVYDVIKSYKISDHRHIPEIEQELCFAACREDINLQFVPNLIPVKRGMMSSIYLELEEGVSLTDVREALLLFYKDSSFVFIDEEKAMTTRSVVGTNYCYLGVFPGRVPNTIIIMSVIDNLLKGAAGQAVQNFNVMMSYDEKIALSNIPYF.

Residue Cys151 is part of the active site.

It belongs to the NAGSA dehydrogenase family. Type 1 subfamily.

The protein resides in the cytoplasm. The catalysed reaction is N-acetyl-L-glutamate 5-semialdehyde + phosphate + NADP(+) = N-acetyl-L-glutamyl 5-phosphate + NADPH + H(+). Its pathway is amino-acid biosynthesis; L-arginine biosynthesis; N(2)-acetyl-L-ornithine from L-glutamate: step 3/4. Its function is as follows. Catalyzes the NADPH-dependent reduction of N-acetyl-5-glutamyl phosphate to yield N-acetyl-L-glutamate 5-semialdehyde. The sequence is that of N-acetyl-gamma-glutamyl-phosphate reductase from Ehrlichia chaffeensis (strain ATCC CRL-10679 / Arkansas).